A 385-amino-acid polypeptide reads, in one-letter code: Putative RNA methyltransferase YpsC (385 aa).

Residues 44 to 156 form the THUMP domain; it reads AICRANLWLR…KDQALITLDS (113 aa).

This sequence belongs to the methyltransferase superfamily. In terms of assembly, interacts with the RNA polymerase core.

This is Putative RNA methyltransferase YpsC (ypsC) from Bacillus subtilis (strain 168).